The primary structure comprises 156 residues: Small ribosomal subunit protein uS7 (156 aa).

It belongs to the universal ribosomal protein uS7 family. In terms of assembly, part of the 30S ribosomal subunit. Contacts proteins S9 and S11.

In terms of biological role, one of the primary rRNA binding proteins, it binds directly to 16S rRNA where it nucleates assembly of the head domain of the 30S subunit. Is located at the subunit interface close to the decoding center, probably blocks exit of the E-site tRNA. The chain is Small ribosomal subunit protein uS7 from Cupriavidus necator (strain ATCC 17699 / DSM 428 / KCTC 22496 / NCIMB 10442 / H16 / Stanier 337) (Ralstonia eutropha).